The sequence spans 503 residues: Mitogen-activated protein kinase kinae mkk2 (503 aa).

The interval M1–S130 is disordered. Residues A53–P66 show a composition bias toward pro residues. A compositionally biased stretch (polar residues) spans T100–T115. Residues A121–S130 are compositionally biased toward low complexity. In terms of domain architecture, Protein kinase spans I211–M481. Residues L217 to V225 and K240 contribute to the ATP site. The active-site Proton acceptor is the D338.

It belongs to the protein kinase superfamily. STE Ser/Thr protein kinase family. MAP kinase kinase subfamily.

The catalysed reaction is L-seryl-[protein] + ATP = O-phospho-L-seryl-[protein] + ADP + H(+). It carries out the reaction L-threonyl-[protein] + ATP = O-phospho-L-threonyl-[protein] + ADP + H(+). In terms of biological role, mitogen-activated kinase kinase (MAPKK), part of the cell wall integrity (CWI) signaling pathway composed by three protein kinases bck1, mkk2 and mpkA and responsible for the maintaining of cell-wall integrity balance. The CWI pathway also regulates the oxidative stress response, as well as the production of some secondary metabolites including pyomelanin. The sequence is that of Mitogen-activated protein kinase kinae mkk2 from Aspergillus fumigatus (strain CBS 144.89 / FGSC A1163 / CEA10) (Neosartorya fumigata).